The chain runs to 375 residues: Chaperone protein DnaJ (375 aa).

The 66-residue stretch at 5–70 folds into the J domain; it reads DYYEVLGVER…SKRAAFDQYG (66 aa). The CR-type zinc finger occupies 134 to 212; sequence GTTVSIRVPT…CHGEGRVEEY (79 aa). Residues C147, C150, C164, C167, C186, C189, C200, and C203 each contribute to the Zn(2+) site. CXXCXGXG motif repeat units follow at residues 147–154, 164–171, 186–193, and 200–207; these read CQPCDGSG, CPTCGGIG, CPRCHGQG, and CTSCHGEG.

This sequence belongs to the DnaJ family. Homodimer. The cofactor is Zn(2+).

Its subcellular location is the cytoplasm. Its function is as follows. Participates actively in the response to hyperosmotic and heat shock by preventing the aggregation of stress-denatured proteins and by disaggregating proteins, also in an autonomous, DnaK-independent fashion. Unfolded proteins bind initially to DnaJ; upon interaction with the DnaJ-bound protein, DnaK hydrolyzes its bound ATP, resulting in the formation of a stable complex. GrpE releases ADP from DnaK; ATP binding to DnaK triggers the release of the substrate protein, thus completing the reaction cycle. Several rounds of ATP-dependent interactions between DnaJ, DnaK and GrpE are required for fully efficient folding. Also involved, together with DnaK and GrpE, in the DNA replication of plasmids through activation of initiation proteins. The polypeptide is Chaperone protein DnaJ (Pseudomonas putida (strain ATCC 47054 / DSM 6125 / CFBP 8728 / NCIMB 11950 / KT2440)).